The primary structure comprises 180 residues: Large ribosomal subunit protein uL5 (180 aa).

The protein belongs to the universal ribosomal protein uL5 family. Part of the 50S ribosomal subunit; part of the 5S rRNA/L5/L18/L25 subcomplex. Contacts the 5S rRNA and the P site tRNA. Forms a bridge to the 30S subunit in the 70S ribosome.

In terms of biological role, this is one of the proteins that bind and probably mediate the attachment of the 5S RNA into the large ribosomal subunit, where it forms part of the central protuberance. In the 70S ribosome it contacts protein S13 of the 30S subunit (bridge B1b), connecting the 2 subunits; this bridge is implicated in subunit movement. Contacts the P site tRNA; the 5S rRNA and some of its associated proteins might help stabilize positioning of ribosome-bound tRNAs. The chain is Large ribosomal subunit protein uL5 from Cupriavidus necator (strain ATCC 17699 / DSM 428 / KCTC 22496 / NCIMB 10442 / H16 / Stanier 337) (Ralstonia eutropha).